Reading from the N-terminus, the 329-residue chain is Bifunctional nuclease 2 (329 aa).

One can recognise a BFN domain in the interval 121 to 256 (CVHNNPQGGN…YLAYSDGMRV (136 aa)). Residues 287–322 (DTKEFDLVRNMMQAVDEERYDEAAEWRDKLGKFQAK) form the UVR domain.

It belongs to the bifunctional nuclease family.

Its subcellular location is the nucleus. Functionally, bifunctional nuclease with both RNase and DNase activities. Involved in basal defense response. Participates in abscisic acid-derived callose deposition following infection by a necrotrophic pathogen. This Arabidopsis thaliana (Mouse-ear cress) protein is Bifunctional nuclease 2 (BBD2).